Reading from the N-terminus, the 631-residue chain is Dolichyl-diphosphooligosaccharide--protein glycosyltransferase subunit 2 (631 aa).

The N-terminal stretch at 1 to 22 (MAPPGSSAVFLLALTITASTQA) is a signal peptide. The Lumenal segment spans residues 23–540 (LTPTHYLTKH…REPEKRPPTV (518 aa)). Residue Asn-106 is glycosylated (N-linked (GlcNAc...) asparagine). Lys-154 is covalently cross-linked (Glycyl lysine isopeptide (Lys-Gly) (interchain with G-Cter in ubiquitin)). The chain crosses the membrane as a helical span at residues 541 to 561 (VSNTFTALILSPLLLLFALWI). Residues 562-571 (RIGANVSNFT) lie on the Cytoplasmic side of the membrane. A helical membrane pass occupies residues 572–592 (FAPSTVIFHLGHAAMLGLMYV). Residues 593–596 (YWTQ) lie on the Lumenal side of the membrane. A helical transmembrane segment spans residues 597 to 617 (LNMFQTLKYLAVLGTVTFLAG). At 618-631 (NRMLAQQAVKRTAH) the chain is on the cytoplasmic side.

This sequence belongs to the SWP1 family. As to quaternary structure, component of the oligosaccharyltransferase (OST) complex. OST exists in two different complex forms which contain common core subunits RPN1, RPN2, OST48, OST4, DAD1 and TMEM258, either STT3A or STT3B as catalytic subunits, and form-specific accessory subunits. STT3A complex assembly occurs through the formation of 3 subcomplexes. Subcomplex 1 contains RPN1 and TMEM258, subcomplex 2 contains the STT3A-specific subunits STT3A, DC2/OSTC, and KCP2 as well as the core subunit OST4, and subcomplex 3 contains RPN2, DAD1, and OST48. The STT3A complex can form stable complexes with the Sec61 complex or with both the Sec61 and TRAP complexes. Interacts with DDI2. Interacts with TMEM35A/NACHO.

The protein resides in the endoplasmic reticulum. It localises to the endoplasmic reticulum membrane. The protein operates within protein modification; protein glycosylation. Its function is as follows. Subunit of the oligosaccharyl transferase (OST) complex that catalyzes the initial transfer of a defined glycan (Glc(3)Man(9)GlcNAc(2) in eukaryotes) from the lipid carrier dolichol-pyrophosphate to an asparagine residue within an Asn-X-Ser/Thr consensus motif in nascent polypeptide chains, the first step in protein N-glycosylation. N-glycosylation occurs cotranslationally and the complex associates with the Sec61 complex at the channel-forming translocon complex that mediates protein translocation across the endoplasmic reticulum (ER). All subunits are required for a maximal enzyme activity. The protein is Dolichyl-diphosphooligosaccharide--protein glycosyltransferase subunit 2 of Rattus norvegicus (Rat).